Reading from the N-terminus, the 270-residue chain is Formamidopyrimidine-DNA glycosylase (270 aa).

The active-site Schiff-base intermediate with DNA is the P2. The active-site Proton donor is the E3. Residue K58 is the Proton donor; for beta-elimination activity of the active site. DNA is bound by residues H91, R110, and R151. An FPG-type zinc finger spans residues 236–270 (FAYGRAGEFCKVCGTTLREVKLGQRASVYCPRCQR). Residue R260 is the Proton donor; for delta-elimination activity of the active site.

The protein belongs to the FPG family. As to quaternary structure, monomer. Zn(2+) is required as a cofactor.

The enzyme catalyses Hydrolysis of DNA containing ring-opened 7-methylguanine residues, releasing 2,6-diamino-4-hydroxy-5-(N-methyl)formamidopyrimidine.. It catalyses the reaction 2'-deoxyribonucleotide-(2'-deoxyribose 5'-phosphate)-2'-deoxyribonucleotide-DNA = a 3'-end 2'-deoxyribonucleotide-(2,3-dehydro-2,3-deoxyribose 5'-phosphate)-DNA + a 5'-end 5'-phospho-2'-deoxyribonucleoside-DNA + H(+). Its function is as follows. Involved in base excision repair of DNA damaged by oxidation or by mutagenic agents. Acts as a DNA glycosylase that recognizes and removes damaged bases. Has a preference for oxidized purines, such as 7,8-dihydro-8-oxoguanine (8-oxoG). Has AP (apurinic/apyrimidinic) lyase activity and introduces nicks in the DNA strand. Cleaves the DNA backbone by beta-delta elimination to generate a single-strand break at the site of the removed base with both 3'- and 5'-phosphates. This is Formamidopyrimidine-DNA glycosylase from Ectopseudomonas mendocina (strain ymp) (Pseudomonas mendocina).